Here is a 731-residue protein sequence, read N- to C-terminus: Ribonuclease R (731 aa).

The RNB domain occupies 260-589 (RTDLRHFPFF…LHRVIKYLLF (330 aa)). Residues 647–728 (GCILNGVISN…NEKKIELSLY (82 aa)) enclose the S1 motif domain.

It belongs to the RNR ribonuclease family. RNase R subfamily. Monomer.

Its subcellular location is the cytoplasm. It carries out the reaction Exonucleolytic cleavage in the 3'- to 5'-direction to yield nucleoside 5'-phosphates.. Its function is as follows. 3'-5' exoribonuclease that releases 5'-nucleoside monophosphates and is involved in maturation of structured RNAs. The polypeptide is Ribonuclease R (Buchnera aphidicola subsp. Acyrthosiphon pisum (strain APS) (Acyrthosiphon pisum symbiotic bacterium)).